Reading from the N-terminus, the 164-residue chain is Putative lung carcinoma-associated protein 10 (164 aa).

The tract at residues 1 to 164 is disordered; it reads MSSCPVHDCP…TQKPQTTVGQ (164 aa). Low complexity predominate over residues 23–40; that stretch reads GSRGALRLRGGAPGSAAG. The segment covering 152-164 has biased composition (polar residues); it reads MQKTQKPQTTVGQ.

The chain is Putative lung carcinoma-associated protein 10 (LCA10) from Homo sapiens (Human).